Consider the following 182-residue polypeptide: Putative manganese efflux pump MntP (182 aa).

Transmembrane regions (helical) follow at residues 6–26, 37–57, 59–79, 104–126, 131–149, and 164–181; these read TVLV…GVGT, LSFH…FVGS, AADL…LFIG, SSLV…SFGI, LFLS…TWGA, and METV…KLLL.

Belongs to the MntP (TC 9.B.29) family.

Its subcellular location is the cell inner membrane. Functionally, probably functions as a manganese efflux pump. The chain is Putative manganese efflux pump MntP from Syntrophobacter fumaroxidans (strain DSM 10017 / MPOB).